A 286-amino-acid chain; its full sequence is 4-hydroxybenzoate octaprenyltransferase (286 aa).

7 consecutive transmembrane segments (helical) span residues 21-40, 96-116, 142-162, 167-187, 210-230, 235-255, and 266-286; these read GTLL…AGGM, LFVI…GLVV, FLGV…TGEV, WWLF…YAMV, QIIG…GWSA, LYGL…MLIF, and FLNN…DYLF.

The protein belongs to the UbiA prenyltransferase family. Requires Mg(2+) as cofactor.

The protein localises to the cell inner membrane. It catalyses the reaction all-trans-octaprenyl diphosphate + 4-hydroxybenzoate = 4-hydroxy-3-(all-trans-octaprenyl)benzoate + diphosphate. Its pathway is cofactor biosynthesis; ubiquinone biosynthesis. Functionally, catalyzes the prenylation of para-hydroxybenzoate (PHB) with an all-trans polyprenyl group. Mediates the second step in the final reaction sequence of ubiquinone-8 (UQ-8) biosynthesis, which is the condensation of the polyisoprenoid side chain with PHB, generating the first membrane-bound Q intermediate 3-octaprenyl-4-hydroxybenzoate. The polypeptide is 4-hydroxybenzoate octaprenyltransferase (Shewanella sp. (strain MR-4)).